The sequence spans 493 residues: Glycylpeptide N-tetradecanoyltransferase (493 aa).

A tetradecanoyl-CoA-binding site is contributed by 45-48 (HKFW). The interval 53 to 73 (VPQITGSGAPAPIEEGPIDDP) is disordered. Residues 182–184 (LCV) and 190–194 (SKRLA) each bind tetradecanoyl-CoA. Residue L493 is the Proton acceptor; via carboxylate of the active site.

It belongs to the NMT family. Monomer.

It localises to the cytoplasm. The enzyme catalyses N-terminal glycyl-[protein] + tetradecanoyl-CoA = N-tetradecanoylglycyl-[protein] + CoA + H(+). Functionally, adds a myristoyl group to the N-terminal glycine residue of certain cellular proteins. The protein is Glycylpeptide N-tetradecanoyltransferase of Cryptococcus neoformans var. neoformans serotype D (strain B-3501A) (Filobasidiella neoformans).